A 309-amino-acid polypeptide reads, in one-letter code: Homoserine kinase (309 aa).

95–105 is a binding site for ATP; sequence PQSRGLGSSAA.

Belongs to the GHMP kinase family. Homoserine kinase subfamily.

The protein resides in the cytoplasm. The enzyme catalyses L-homoserine + ATP = O-phospho-L-homoserine + ADP + H(+). Its pathway is amino-acid biosynthesis; L-threonine biosynthesis; L-threonine from L-aspartate: step 4/5. In terms of biological role, catalyzes the ATP-dependent phosphorylation of L-homoserine to L-homoserine phosphate. The polypeptide is Homoserine kinase (Corynebacterium efficiens (strain DSM 44549 / YS-314 / AJ 12310 / JCM 11189 / NBRC 100395)).